The primary structure comprises 353 residues: tRNA-specific 2-thiouridylase MnmA 2 (353 aa).

Residues 9–16 (AMSGGVDS) and Met35 contribute to the ATP site. Cys98 serves as the catalytic Nucleophile. Cys98 and Cys194 are disulfide-bonded. Gly122 contributes to the ATP binding site. Positions 144–146 (KDQ) are interaction with tRNA. Cys194 (cysteine persulfide intermediate) is an active-site residue. An interaction with tRNA region spans residues 300–301 (RY).

It belongs to the MnmA/TRMU family.

Its subcellular location is the cytoplasm. The catalysed reaction is S-sulfanyl-L-cysteinyl-[protein] + uridine(34) in tRNA + AH2 + ATP = 2-thiouridine(34) in tRNA + L-cysteinyl-[protein] + A + AMP + diphosphate + H(+). In terms of biological role, catalyzes the 2-thiolation of uridine at the wobble position (U34) of tRNA, leading to the formation of s(2)U34. The sequence is that of tRNA-specific 2-thiouridylase MnmA 2 from Clostridium botulinum (strain ATCC 19397 / Type A).